A 449-amino-acid polypeptide reads, in one-letter code: Endoglucanase A (449 aa).

The tat-type signal signal peptide spans 1-31 (MSTRRTAAALLAAAAVAVGGLTALTTTAAQA). Positions 32–137 (APGCRVDYAV…SLNGTTCTGT (106 aa)) constitute a CBM2 domain. A disulfide bridge links Cys-35 with Cys-134. Residues 127–170 (FSLNGTTCTGTVPTTSPTPTPTPTTPTPTPTPTPTPTPTVTPQP) form a disordered region. Over residues 132–141 (TTCTGTVPTT) the composition is skewed to low complexity. A linker ('hinge') (Pro-Thr box) region spans residues 139–168 (PTTSPTPTPTPTTPTPTPTPTPTPTPTVTP). Over residues 142 to 167 (SPTPTPTPTTPTPTPTPTPTPTPTVT) the composition is skewed to pro residues. The active site involves Asp-247. Intrachain disulfides connect Cys-248–Cys-291 and Cys-390–Cys-426. Asp-283 (proton donor) is an active-site residue. Catalysis depends on Asp-423, which acts as the Nucleophile. Residues 438-449 (EIALEMARNARW) are catalytic.

The protein belongs to the glycosyl hydrolase 6 (cellulase B) family. The linker region (also termed 'hinge') may be a potential site for proteolysis. Post-translationally, predicted to be exported by the Tat system. The position of the signal peptide cleavage has not been experimentally proven.

It carries out the reaction Endohydrolysis of (1-&gt;4)-beta-D-glucosidic linkages in cellulose, lichenin and cereal beta-D-glucans.. Its function is as follows. The biological conversion of cellulose to glucose generally requires three types of hydrolytic enzymes: (1) Endoglucanases which cut internal beta-1,4-glucosidic bonds; (2) Exocellobiohydrolases that cut the disaccharide cellobiose from the non-reducing end of the cellulose polymer chain; (3) Beta-1,4-glucosidases which hydrolyze the cellobiose and other short cello-oligosaccharides to glucose. The chain is Endoglucanase A (cenA) from Cellulomonas fimi.